Here is a 489-residue protein sequence, read N- to C-terminus: Topoisomerase I damage affected protein 11 (489 aa).

Disordered stretches follow at residues 1-199, 263-321, 344-370, 391-413, and 439-477; these read MDQK…QSMA, INVS…DDNK, ERTLNWDEPPTPVEETEENQEGDKSVS, EDGHHTQQSNSNVNRPKNTHGQV, and DDNSDTHLKQRSGRTAVRKTKSGNKLNFVDDSDDGDSTL. The segment covering 19–35 has biased composition (polar residues); it reads DTSSRYTTGSISPQFAS. Basic and acidic residues predominate over residues 73–89; sequence EESHNHPLKEDKSESRQ. Polar residues-rich tracts occupy residues 90–103, 128–147, and 156–167; these read RQVSVSNSNPSSKG, PQSQSNVASGNSANKNNLHP, and NATTQTPSSMSM. The segment covering 182-197 has biased composition (low complexity); that stretch reads SSKRNSMHSRTSSSQS. Residues 210-266 adopt a coiled-coil conformation; sequence VNALLQSLANKELELLECKRKIDDLKKQLHMEENIYQNKANELQELKNKVSKNINVS. Residues 263–281 are compositionally biased toward polar residues; it reads INVSGSNQPVFNKTSTTGR. Residues 396-411 are compositionally biased toward polar residues; the sequence is TQQSNSNVNRPKNTHG. Residues 447–460 are compositionally biased toward basic residues; that stretch reads KQRSGRTAVRKTKS. Residues 468–477 show a composition bias toward acidic residues; the sequence is DDSDDGDSTL.

This sequence belongs to the TDA11 family.

It localises to the cytoplasm. The chain is Topoisomerase I damage affected protein 11 (TDA11) from Candida glabrata (strain ATCC 2001 / BCRC 20586 / JCM 3761 / NBRC 0622 / NRRL Y-65 / CBS 138) (Yeast).